Here is a 118-residue protein sequence, read N- to C-terminus: Large ribosomal subunit protein uL18 (118 aa).

This sequence belongs to the universal ribosomal protein uL18 family. In terms of assembly, part of the 50S ribosomal subunit; part of the 5S rRNA/L5/L18/L25 subcomplex. Contacts the 5S and 23S rRNAs.

Functionally, this is one of the proteins that bind and probably mediate the attachment of the 5S RNA into the large ribosomal subunit, where it forms part of the central protuberance. In Wolinella succinogenes (strain ATCC 29543 / DSM 1740 / CCUG 13145 / JCM 31913 / LMG 7466 / NCTC 11488 / FDC 602W) (Vibrio succinogenes), this protein is Large ribosomal subunit protein uL18.